The sequence spans 202 residues: uncharacterized protein (202 aa).

An HTH tetR-type domain is found at 13–73; the sequence is ELAADRILDA…AYVHRETRRL (61 aa). The segment at residues 36–55 is a DNA-binding region (H-T-H motif); that stretch reads GMNEIAKAAGCSRATLYRYF.

This is an uncharacterized protein from Mycobacterium tuberculosis (strain CDC 1551 / Oshkosh).